A 148-amino-acid polypeptide reads, in one-letter code: UPF0179 protein VNG_1401C (148 aa).

This sequence belongs to the UPF0179 family.

The chain is UPF0179 protein VNG_1401C from Halobacterium salinarum (strain ATCC 700922 / JCM 11081 / NRC-1) (Halobacterium halobium).